The primary structure comprises 505 residues: Maturase K (505 aa).

The protein belongs to the intron maturase 2 family. MatK subfamily.

Its subcellular location is the plastid. It is found in the chloroplast. Functionally, usually encoded in the trnK tRNA gene intron. Probably assists in splicing its own and other chloroplast group II introns. This is Maturase K from Ulmus parvifolia (Chinese elm).